We begin with the raw amino-acid sequence, 118 residues long: Putative pterin-4-alpha-carbinolamine dehydratase (118 aa).

The protein belongs to the pterin-4-alpha-carbinolamine dehydratase family.

It catalyses the reaction (4aS,6R)-4a-hydroxy-L-erythro-5,6,7,8-tetrahydrobiopterin = (6R)-L-erythro-6,7-dihydrobiopterin + H2O. The polypeptide is Putative pterin-4-alpha-carbinolamine dehydratase (Pseudomonas paraeruginosa (strain DSM 24068 / PA7) (Pseudomonas aeruginosa (strain PA7))).